A 419-amino-acid chain; its full sequence is Probable dual-specificity RNA methyltransferase RlmN (419 aa).

Residues 1-21 (MTAESDSPDGPVSAGTGRPVR) form a disordered region. The active-site Proton acceptor is the Glu124. The Radical SAM core domain occupies 130–369 (YPDRATVCVS…ATTVRDTRGR (240 aa)). A disulfide bond links Cys137 and Cys375. 3 residues coordinate [4Fe-4S] cluster: Cys144, Cys148, and Cys151. S-adenosyl-L-methionine-binding positions include 199-200 (GE), Ser233, 256-258 (SLH), and Asn332. Cys375 serves as the catalytic S-methylcysteine intermediate. Residues 383–419 (AGRARRVESARPVESARPVGVAGAASGSPAHGSRVLR) are disordered. A compositionally biased stretch (low complexity) spans 397-419 (SARPVGVAGAASGSPAHGSRVLR).

This sequence belongs to the radical SAM superfamily. RlmN family. [4Fe-4S] cluster serves as cofactor.

The protein localises to the cytoplasm. It catalyses the reaction adenosine(2503) in 23S rRNA + 2 reduced [2Fe-2S]-[ferredoxin] + 2 S-adenosyl-L-methionine = 2-methyladenosine(2503) in 23S rRNA + 5'-deoxyadenosine + L-methionine + 2 oxidized [2Fe-2S]-[ferredoxin] + S-adenosyl-L-homocysteine. The catalysed reaction is adenosine(37) in tRNA + 2 reduced [2Fe-2S]-[ferredoxin] + 2 S-adenosyl-L-methionine = 2-methyladenosine(37) in tRNA + 5'-deoxyadenosine + L-methionine + 2 oxidized [2Fe-2S]-[ferredoxin] + S-adenosyl-L-homocysteine. Specifically methylates position 2 of adenine 2503 in 23S rRNA and position 2 of adenine 37 in tRNAs. In Frankia alni (strain DSM 45986 / CECT 9034 / ACN14a), this protein is Probable dual-specificity RNA methyltransferase RlmN.